The chain runs to 282 residues: ESX-1 secretion-associated protein EspG1 (282 aa).

It belongs to the EspG family. Interacts specifically with ESX-1-dependent PE/PPE proteins.

The protein localises to the cytoplasm. Part of the ESX-1 / type VII specialized secretion system (T7SS), which exports several proteins including EsxA and EsxB. Specific chaperone for cognate PE/PPE proteins, plays an important role in preventing aggregation of PE/PPE dimers. Also plays a role in DNA conjugation, in at least recipient strain. The chain is ESX-1 secretion-associated protein EspG1 from Mycolicibacterium smegmatis (strain ATCC 700084 / mc(2)155) (Mycobacterium smegmatis).